The chain runs to 47 residues: PhoP/PhoQ regulator MgrB (47 aa).

A helical transmembrane segment spans residues 6–26 (WVLLIVIIAGCLLLWTQMLNV).

The protein belongs to the MgrB family. May form homooligomers. Probably interacts with the periplasmic domain of PhoQ.

The protein localises to the cell inner membrane. In terms of biological role, phoP-regulated transcription is redox-sensitive, being activated when the periplasm becomes more reducing. MgrB acts between DsbA/DsbB and PhoP/PhoQ in this pathway. Represses PhoP/PhoQ signaling, possibly by binding to the periplasmic domain of PhoQ, altering its activity and that of downstream effector PhoP. In Klebsiella pneumoniae (strain 342), this protein is PhoP/PhoQ regulator MgrB.